Reading from the N-terminus, the 257-residue chain is Triosephosphate isomerase (257 aa).

9–11 (NWK) serves as a coordination point for substrate. Residue His-97 is the Electrophile of the active site. Catalysis depends on Glu-169, which acts as the Proton acceptor. Substrate contacts are provided by residues Gly-175, Ser-214, and 235–236 (GG).

Belongs to the triosephosphate isomerase family. In terms of assembly, homodimer.

The protein resides in the cytoplasm. It carries out the reaction D-glyceraldehyde 3-phosphate = dihydroxyacetone phosphate. The protein operates within carbohydrate biosynthesis; gluconeogenesis. Its pathway is carbohydrate degradation; glycolysis; D-glyceraldehyde 3-phosphate from glycerone phosphate: step 1/1. In terms of biological role, involved in the gluconeogenesis. Catalyzes stereospecifically the conversion of dihydroxyacetone phosphate (DHAP) to D-glyceraldehyde-3-phosphate (G3P). The polypeptide is Triosephosphate isomerase (Vibrio cholerae serotype O1 (strain ATCC 39315 / El Tor Inaba N16961)).